The following is a 735-amino-acid chain: Ion-translocating oxidoreductase complex subunit C (735 aa).

4Fe-4S ferredoxin-type domains lie at 368–397 (MGAP…QQLY) and 407–436 (KATA…VQYF). The [4Fe-4S] cluster site is built by Cys-377, Cys-380, Cys-383, Cys-387, Cys-416, Cys-419, Cys-422, and Cys-426. The segment at 534 to 715 (QARAKQAAHP…AVDPRKAAVA (182 aa)) is disordered. Positions 666 to 689 (QQAGSEPAEPAAPRKAAVEAAIAR) are enriched in low complexity.

The protein belongs to the 4Fe4S bacterial-type ferredoxin family. RnfC subfamily. The complex is composed of six subunits: RsxA, RsxB, RsxC, RsxD, RsxE and RsxG. [4Fe-4S] cluster is required as a cofactor.

Its subcellular location is the cell inner membrane. Its function is as follows. Part of a membrane-bound complex that couples electron transfer with translocation of ions across the membrane. Required to maintain the reduced state of SoxR. In Salmonella paratyphi B (strain ATCC BAA-1250 / SPB7), this protein is Ion-translocating oxidoreductase complex subunit C.